The chain runs to 306 residues: Protein FdhE homolog (306 aa).

Belongs to the FdhE family.

The protein localises to the cytoplasm. Its function is as follows. Necessary for formate dehydrogenase activity. This chain is Protein FdhE homolog, found in Proteus mirabilis (strain HI4320).